We begin with the raw amino-acid sequence, 182 residues long: Translation initiation factor IF-3 (182 aa).

This sequence belongs to the IF-3 family. Monomer.

The protein resides in the cytoplasm. Functionally, IF-3 binds to the 30S ribosomal subunit and shifts the equilibrium between 70S ribosomes and their 50S and 30S subunits in favor of the free subunits, thus enhancing the availability of 30S subunits on which protein synthesis initiation begins. The protein is Translation initiation factor IF-3 of Tropheryma whipplei (strain TW08/27) (Whipple's bacillus).